We begin with the raw amino-acid sequence, 250 residues long: 3-deoxy-manno-octulosonate cytidylyltransferase (250 aa).

This sequence belongs to the KdsB family.

It localises to the cytoplasm. It carries out the reaction 3-deoxy-alpha-D-manno-oct-2-ulosonate + CTP = CMP-3-deoxy-beta-D-manno-octulosonate + diphosphate. It functions in the pathway nucleotide-sugar biosynthesis; CMP-3-deoxy-D-manno-octulosonate biosynthesis; CMP-3-deoxy-D-manno-octulosonate from 3-deoxy-D-manno-octulosonate and CTP: step 1/1. The protein operates within bacterial outer membrane biogenesis; lipopolysaccharide biosynthesis. Activates KDO (a required 8-carbon sugar) for incorporation into bacterial lipopolysaccharide in Gram-negative bacteria. This Rhodopirellula baltica (strain DSM 10527 / NCIMB 13988 / SH1) protein is 3-deoxy-manno-octulosonate cytidylyltransferase.